Consider the following 356-residue polypeptide: Phosphoserine aminotransferase (356 aa).

R41 is a binding site for L-glutamate. Residues 76 to 77, W102, T150, D169, and Q192 each bind pyridoxal 5'-phosphate; that span reads AS. K193 is modified (N6-(pyridoxal phosphate)lysine). 234–235 provides a ligand contact to pyridoxal 5'-phosphate; it reads NT.

This sequence belongs to the class-V pyridoxal-phosphate-dependent aminotransferase family. SerC subfamily. In terms of assembly, homodimer. Pyridoxal 5'-phosphate is required as a cofactor.

The protein resides in the cytoplasm. The catalysed reaction is O-phospho-L-serine + 2-oxoglutarate = 3-phosphooxypyruvate + L-glutamate. It catalyses the reaction 4-(phosphooxy)-L-threonine + 2-oxoglutarate = (R)-3-hydroxy-2-oxo-4-phosphooxybutanoate + L-glutamate. Its pathway is amino-acid biosynthesis; L-serine biosynthesis; L-serine from 3-phospho-D-glycerate: step 2/3. It participates in cofactor biosynthesis; pyridoxine 5'-phosphate biosynthesis; pyridoxine 5'-phosphate from D-erythrose 4-phosphate: step 3/5. In terms of biological role, catalyzes the reversible conversion of 3-phosphohydroxypyruvate to phosphoserine and of 3-hydroxy-2-oxo-4-phosphonooxybutanoate to phosphohydroxythreonine. This chain is Phosphoserine aminotransferase, found in Flavobacterium psychrophilum (strain ATCC 49511 / DSM 21280 / CIP 103535 / JIP02/86).